A 297-amino-acid chain; its full sequence is GTPase Era (297 aa).

Residues R7–A174 enclose the Era-type G domain. The tract at residues G15 to S22 is G1. G15–S22 is a binding site for GTP. Residues Q41–N45 are G2. Residues D62 to G65 are G3. Residues D62–I66 and N124–D127 contribute to the GTP site. Residues N124–D127 are G4. A G5 region spans residues V153–A155. The region spanning T205–K282 is the KH type-2 domain.

It belongs to the TRAFAC class TrmE-Era-EngA-EngB-Septin-like GTPase superfamily. Era GTPase family. In terms of assembly, monomer.

The protein localises to the cytoplasm. Its subcellular location is the cell inner membrane. Functionally, an essential GTPase that binds both GDP and GTP, with rapid nucleotide exchange. Plays a role in 16S rRNA processing and 30S ribosomal subunit biogenesis and possibly also in cell cycle regulation and energy metabolism. The chain is GTPase Era from Geotalea uraniireducens (strain Rf4) (Geobacter uraniireducens).